The sequence spans 243 residues: tRNA (guanine-N(1)-)-methyltransferase (243 aa).

S-adenosyl-L-methionine contacts are provided by residues Gly-110 and 130–135 (VGDYVM).

Belongs to the RNA methyltransferase TrmD family. Homodimer.

The protein localises to the cytoplasm. It carries out the reaction guanosine(37) in tRNA + S-adenosyl-L-methionine = N(1)-methylguanosine(37) in tRNA + S-adenosyl-L-homocysteine + H(+). In terms of biological role, specifically methylates guanosine-37 in various tRNAs. This is tRNA (guanine-N(1)-)-methyltransferase from Treponema denticola (strain ATCC 35405 / DSM 14222 / CIP 103919 / JCM 8153 / KCTC 15104).